Reading from the N-terminus, the 184-residue chain is ATP synthase subunit b, chloroplastic (184 aa).

A helical transmembrane segment spans residues 27–49 (LATNPINLSVVLGVLIFFGKGVL).

It belongs to the ATPase B chain family. In terms of assembly, F-type ATPases have 2 components, F(1) - the catalytic core - and F(0) - the membrane proton channel. F(1) has five subunits: alpha(3), beta(3), gamma(1), delta(1), epsilon(1). F(0) has four main subunits: a(1), b(1), b'(1) and c(10-14). The alpha and beta chains form an alternating ring which encloses part of the gamma chain. F(1) is attached to F(0) by a central stalk formed by the gamma and epsilon chains, while a peripheral stalk is formed by the delta, b and b' chains.

The protein resides in the plastid. Its subcellular location is the chloroplast thylakoid membrane. Functionally, f(1)F(0) ATP synthase produces ATP from ADP in the presence of a proton or sodium gradient. F-type ATPases consist of two structural domains, F(1) containing the extramembraneous catalytic core and F(0) containing the membrane proton channel, linked together by a central stalk and a peripheral stalk. During catalysis, ATP synthesis in the catalytic domain of F(1) is coupled via a rotary mechanism of the central stalk subunits to proton translocation. Component of the F(0) channel, it forms part of the peripheral stalk, linking F(1) to F(0). The protein is ATP synthase subunit b, chloroplastic of Populus alba (White poplar).